Reading from the N-terminus, the 207-residue chain is p-benzoquinone reductase (207 aa).

The Flavodoxin-like domain occupies isoleucine 5–valine 196. FMN contacts are provided by residues serine 11–isoleucine 16, threonine 84–phenylalanine 86, serine 119–glycine 125, and histidine 140. Tyrosine 13 lines the NADP(+) pocket.

Belongs to the WrbA family. As to quaternary structure, homodimer. FMN is required as a cofactor.

The catalysed reaction is 1,4-benzoquinone + NADPH + H(+) = hydroquinone + NADP(+). It participates in xenobiotic degradation; 4-nitrophenol degradation. Functionally, involved in the degradation of para-nitrophenol (PNP). Catalyzes the reduction of p-benzoquinone to hydroquinone. The polypeptide is p-benzoquinone reductase (pnpB) (Pseudomonas sp. (strain WBC-3)).